The chain runs to 281 residues: MNIVNTIKDVKLIIKKWKDENLSIGYVPTMGYLHEGHASLIKKAREENDKVIVSIFVNPIQFGPKEDYSIYPRDLVKDSSLCEKFEVDLIFNPETSEMYPNKIYSHVNVDILTQNLCGEKRPGHFQGVCTVLTKFFNILNPTKAYFGEKDAQQLAVVKKMVEDLNFPIEIIGCPIIREEDGLAKSSRNAYLNKQERKSALILNKSLKEALNALESGEKNSNNIRDIIVSKLNKEPLAKIDYVSIVDSITLQSVEKIQSSILVAIAVYIGKTRLIDNFTFKL.

30-37 (MGYLHEGH) contributes to the ATP binding site. The Proton donor role is filled by histidine 37. Position 61 (glutamine 61) interacts with (R)-pantoate. Glutamine 61 is a beta-alanine binding site. An ATP-binding site is contributed by 147 to 150 (GEKD). Glutamine 153 serves as a coordination point for (R)-pantoate. Residues isoleucine 176 and 184-187 (KSSR) contribute to the ATP site.

Belongs to the pantothenate synthetase family. As to quaternary structure, homodimer.

The protein resides in the cytoplasm. The catalysed reaction is (R)-pantoate + beta-alanine + ATP = (R)-pantothenate + AMP + diphosphate + H(+). The protein operates within cofactor biosynthesis; (R)-pantothenate biosynthesis; (R)-pantothenate from (R)-pantoate and beta-alanine: step 1/1. In terms of biological role, catalyzes the condensation of pantoate with beta-alanine in an ATP-dependent reaction via a pantoyl-adenylate intermediate. The polypeptide is Pantothenate synthetase (Clostridium botulinum (strain 657 / Type Ba4)).